Consider the following 65-residue polypeptide: uncharacterized protein (65 aa).

Residues 1-16 (MMHVCSLLVSFDVVKS) form the signal peptide.

This is an uncharacterized protein from Saccharomyces cerevisiae (strain ATCC 204508 / S288c) (Baker's yeast).